The following is a 1305-amino-acid chain: DNA-directed DNA polymerase (1305 aa).

The protein belongs to the DNA polymerase type-C family.

It catalyses the reaction DNA(n) + a 2'-deoxyribonucleoside 5'-triphosphate = DNA(n+1) + diphosphate. In terms of biological role, replicates viral genomic DNA. This chain is DNA-directed DNA polymerase, found in Bacillus pumilus (Bacillus mesentericus).